A 366-amino-acid polypeptide reads, in one-letter code: MSMNSFGHLFRVTTWGESHGPALGATVDGCPPGVPIEEAMIQHWLDRRKPGQNKYTTQRREADEVKILSGVFEGQTTGTPVQLMIENTDQRSKDYGDIKDKFRPGHADITYFQKYGIRDYRGGGRSSARETAARVAAGGLAREAIRALAPNAQITGYMVQMGPHRIDRARFDWAQIEQNPFWVPDAQAASDWADYLDGLRKSGSSVGAVIEVVARGVPAGLGAPVYGKLDTDLAAAMMSINAVKGVEIGEGMAAAELTGEANADEIFMGQNGPQYSSNHAGGILGGISTGQDIVVRFAVKPTSSILTTRKTITKSGEETEIITKGRHDPCVGIRAVPVGEAMMACVILDHLLLHRGQIGANRGHIG.

R48 provides a ligand contact to NADP(+). FMN is bound by residues 125–127, 241–242, G285, 300–304, and R326; these read RSS, NA, and KPTSS.

This sequence belongs to the chorismate synthase family. As to quaternary structure, homotetramer. Requires FMNH2 as cofactor.

The catalysed reaction is 5-O-(1-carboxyvinyl)-3-phosphoshikimate = chorismate + phosphate. It participates in metabolic intermediate biosynthesis; chorismate biosynthesis; chorismate from D-erythrose 4-phosphate and phosphoenolpyruvate: step 7/7. Functionally, catalyzes the anti-1,4-elimination of the C-3 phosphate and the C-6 proR hydrogen from 5-enolpyruvylshikimate-3-phosphate (EPSP) to yield chorismate, which is the branch point compound that serves as the starting substrate for the three terminal pathways of aromatic amino acid biosynthesis. This reaction introduces a second double bond into the aromatic ring system. In Ruegeria pomeroyi (strain ATCC 700808 / DSM 15171 / DSS-3) (Silicibacter pomeroyi), this protein is Chorismate synthase.